Reading from the N-terminus, the 416-residue chain is D-amino acid dehydrogenase (416 aa).

An FAD-binding site is contributed by 3–17 (ITILGSGVIGVTTAY).

This sequence belongs to the DadA oxidoreductase family. FAD serves as cofactor.

The enzyme catalyses a D-alpha-amino acid + A + H2O = a 2-oxocarboxylate + AH2 + NH4(+). It functions in the pathway amino-acid degradation; D-alanine degradation; NH(3) and pyruvate from D-alanine: step 1/1. Functionally, oxidative deamination of D-amino acids. This Brucella anthropi (strain ATCC 49188 / DSM 6882 / CCUG 24695 / JCM 21032 / LMG 3331 / NBRC 15819 / NCTC 12168 / Alc 37) (Ochrobactrum anthropi) protein is D-amino acid dehydrogenase.